We begin with the raw amino-acid sequence, 89 residues long: Dynein light chain LC6, flagellar outer arm (89 aa).

The protein belongs to the dynein light chain family. As to quaternary structure, consists of at least 3 heavy chains (alpha, beta and gamma), 2 intermediate chains and 8 light chains.

It is found in the cytoplasm. The protein resides in the cytoskeleton. The protein localises to the flagellum axoneme. The protein is Dynein light chain LC6, flagellar outer arm of Heliocidaris crassispina (Sea urchin).